The sequence spans 157 residues: 6,7-dimethyl-8-ribityllumazine synthase (157 aa).

5-amino-6-(D-ribitylamino)uracil-binding positions include Phe23, 57–59 (AFE), and 81–83 (AVI). 86 to 87 (AT) is a (2S)-2-hydroxy-3-oxobutyl phosphate binding site. His89 serves as the catalytic Proton donor. Phe114 serves as a coordination point for 5-amino-6-(D-ribitylamino)uracil. Residue Arg128 coordinates (2S)-2-hydroxy-3-oxobutyl phosphate.

This sequence belongs to the DMRL synthase family.

It catalyses the reaction (2S)-2-hydroxy-3-oxobutyl phosphate + 5-amino-6-(D-ribitylamino)uracil = 6,7-dimethyl-8-(1-D-ribityl)lumazine + phosphate + 2 H2O + H(+). It participates in cofactor biosynthesis; riboflavin biosynthesis; riboflavin from 2-hydroxy-3-oxobutyl phosphate and 5-amino-6-(D-ribitylamino)uracil: step 1/2. Catalyzes the formation of 6,7-dimethyl-8-ribityllumazine by condensation of 5-amino-6-(D-ribitylamino)uracil with 3,4-dihydroxy-2-butanone 4-phosphate. This is the penultimate step in the biosynthesis of riboflavin. This is 6,7-dimethyl-8-ribityllumazine synthase from Desulforapulum autotrophicum (strain ATCC 43914 / DSM 3382 / VKM B-1955 / HRM2) (Desulfobacterium autotrophicum).